The following is a 283-amino-acid chain: Protein boule-like (283 aa).

Positions 1-25 (MQTDSLSPSPNPVSPVPLNNPTSAP) are disordered. Residues 33–110 (NRIFVGGIDF…KKLNIGPAIR (78 aa)) form the RRM domain. One can recognise a DAZ domain in the interval 160-184 (PSRSVCSSPVMVAQPIYQQPAYHYQ).

It belongs to the RRM DAZ family. Interacts with DAZ1 and DAZL. As to expression, testis specific. Not expressed in early embryos, primordial germ cells and spermatogonial cells. First expressed in the cytoplasm of spermatocytes and then persists through meiosis.

Its subcellular location is the cytoplasm. Its function is as follows. Probable RNA-binding protein, which may be required during spermatogenesis. May act by binding to the 3'-UTR of mRNAs and regulating their translation. This is Protein boule-like (BOLL) from Homo sapiens (Human).